Reading from the N-terminus, the 309-residue chain is Homoserine kinase (309 aa).

Residue 91–101 (PIGSGLGSSAC) participates in ATP binding.

The protein belongs to the GHMP kinase family. Homoserine kinase subfamily.

It localises to the cytoplasm. The enzyme catalyses L-homoserine + ATP = O-phospho-L-homoserine + ADP + H(+). It functions in the pathway amino-acid biosynthesis; L-threonine biosynthesis; L-threonine from L-aspartate: step 4/5. In terms of biological role, catalyzes the ATP-dependent phosphorylation of L-homoserine to L-homoserine phosphate. The chain is Homoserine kinase from Pectobacterium atrosepticum (strain SCRI 1043 / ATCC BAA-672) (Erwinia carotovora subsp. atroseptica).